The chain runs to 114 residues: Iron-sulfur cluster insertion protein ErpA (114 aa).

Residues Cys-42, Cys-106, and Cys-108 each contribute to the iron-sulfur cluster site.

The protein belongs to the HesB/IscA family. As to quaternary structure, homodimer. It depends on iron-sulfur cluster as a cofactor.

Required for insertion of 4Fe-4S clusters for at least IspG. In Haemophilus ducreyi (strain 35000HP / ATCC 700724), this protein is Iron-sulfur cluster insertion protein ErpA.